We begin with the raw amino-acid sequence, 546 residues long: Glutamate--tRNA ligase (546 aa).

The short motif at 42–52 (PSPTGFIHLGN) is the 'HIGH' region element. Residues 293–297 (KLSKR) carry the 'KMSKS' region motif. Position 296 (Lys-296) interacts with ATP.

Belongs to the class-I aminoacyl-tRNA synthetase family. Glutamate--tRNA ligase type 1 subfamily. In terms of assembly, monomer.

Its subcellular location is the cytoplasm. The catalysed reaction is tRNA(Glu) + L-glutamate + ATP = L-glutamyl-tRNA(Glu) + AMP + diphosphate. Functionally, catalyzes the attachment of glutamate to tRNA(Glu) in a two-step reaction: glutamate is first activated by ATP to form Glu-AMP and then transferred to the acceptor end of tRNA(Glu). This Acetivibrio thermocellus (strain ATCC 27405 / DSM 1237 / JCM 9322 / NBRC 103400 / NCIMB 10682 / NRRL B-4536 / VPI 7372) (Clostridium thermocellum) protein is Glutamate--tRNA ligase.